Reading from the N-terminus, the 180-residue chain is ATP-dependent protease subunit HslV (180 aa).

T5 is an active-site residue. The Na(+) site is built by G161, C164, and T167.

This sequence belongs to the peptidase T1B family. HslV subfamily. In terms of assembly, a double ring-shaped homohexamer of HslV is capped on each side by a ring-shaped HslU homohexamer. The assembly of the HslU/HslV complex is dependent on binding of ATP.

The protein resides in the cytoplasm. The enzyme catalyses ATP-dependent cleavage of peptide bonds with broad specificity.. Its activity is regulated as follows. Allosterically activated by HslU binding. In terms of biological role, protease subunit of a proteasome-like degradation complex believed to be a general protein degrading machinery. In Campylobacter jejuni subsp. doylei (strain ATCC BAA-1458 / RM4099 / 269.97), this protein is ATP-dependent protease subunit HslV.